Reading from the N-terminus, the 346-residue chain is MAQNPFKALNINIDKIESALTQNGVTNYSSNVKNERETHISGTYKGIDFLIKLMPSGGNTTIGRASGQNNTYFDEIALIIKENCLYSDTKNFEYTIPKFSDDDRANLFEFLSEEGITITEDNNNDPNCKHQYIMTTSNGDRVRAKIYKRGSIQFQGKYLQIASLINDFMCSILNMKEIVEQKNKEFNVDIKKETIESELHSKLPKSIDKIHEDIKKQLSCSLIMKKIDVEMEDYSTYCFSALRAIEGFIYQILNDVCNPSSSKNLGEYFTENKPKYIIREIHQETINGEIAEVLCECYTYWHENRHGLFHMKPGIADTKTINKLESIAIIDTVCQLIDGGVARLKL.

As to quaternary structure, can form a complex with cognate antitoxin LsoB and with enterobacteria phage T4 antitoxin Dmd.

Its function is as follows. Toxic component of a type II toxin-antitoxin (TA) system. A stable (half-life over 20 minutes) endoribonuclease that degrades mRNA. Degradation may be translation-stimulated. Overexpression in the absence of cognate antitoxin LsoB causes retarded growth and mRNA degradation, this effect is mitigated upon coexpression with antitoxin LsoB or enterobacteria phage T4 Dmd. Degrades late enterobacteria phage T4 mRNAs, protecting the host against T4 reproduction. The sequence is that of mRNA endoribonuclease LsoA (lsoA) from Escherichia coli O157:H7.